The sequence spans 126 residues: Small ribosomal subunit protein bS6 (126 aa).

A disordered region spans residues 101 to 126; sequence VMMKAKEERSAKREDAAPRAEEAAAE. Basic and acidic residues predominate over residues 104-126; it reads KAKEERSAKREDAAPRAEEAAAE.

It belongs to the bacterial ribosomal protein bS6 family.

Binds together with bS18 to 16S ribosomal RNA. The protein is Small ribosomal subunit protein bS6 of Aliivibrio fischeri (strain ATCC 700601 / ES114) (Vibrio fischeri).